Consider the following 489-residue polypeptide: Phenylalanine--tRNA ligase alpha subunit (489 aa).

L-phenylalanine-binding positions include T316, 355–357 (QLD), F395, and F420.

The protein belongs to the class-II aminoacyl-tRNA synthetase family. Phe-tRNA synthetase alpha subunit type 2 subfamily. In terms of assembly, tetramer of two alpha and two beta subunits. Mg(2+) serves as cofactor.

The protein localises to the cytoplasm. The enzyme catalyses tRNA(Phe) + L-phenylalanine + ATP = L-phenylalanyl-tRNA(Phe) + AMP + diphosphate + H(+). The sequence is that of Phenylalanine--tRNA ligase alpha subunit from Pyrobaculum aerophilum (strain ATCC 51768 / DSM 7523 / JCM 9630 / CIP 104966 / NBRC 100827 / IM2).